A 163-amino-acid chain; its full sequence is Phosphopantetheine adenylyltransferase (163 aa).

Thr-9 lines the substrate pocket. ATP is bound by residues 9–10 (TF) and His-17. 3 residues coordinate substrate: Lys-41, Thr-73, and Arg-87. ATP is bound by residues 88-90 (GLR), Glu-98, and 123-129 (FSFISSS).

This sequence belongs to the bacterial CoaD family. In terms of assembly, homohexamer. Mg(2+) serves as cofactor.

Its subcellular location is the cytoplasm. It carries out the reaction (R)-4'-phosphopantetheine + ATP + H(+) = 3'-dephospho-CoA + diphosphate. It functions in the pathway cofactor biosynthesis; coenzyme A biosynthesis; CoA from (R)-pantothenate: step 4/5. Reversibly transfers an adenylyl group from ATP to 4'-phosphopantetheine, yielding dephospho-CoA (dPCoA) and pyrophosphate. The protein is Phosphopantetheine adenylyltransferase of Desulfitobacterium hafniense (strain Y51).